The primary structure comprises 1006 residues: D-2-hydroxyglutarate dehydrogenase (1006 aa).

The 233-residue stretch at 47 to 279 folds into the FAD-binding PCMH-type domain; the sequence is YQRLPQAAVF…VEAKLNVLPI (233 aa). 2 residues coordinate (R)-2-hydroxyglutarate: Arg397 and His495. Residues 655-687 enclose the 4Fe-4S ferredoxin-type domain; it reads SHEVYDAMAGCLACKSCAGQCPIKVNVPDFRSR. [4Fe-4S] cluster contacts are provided by Cys665, Cys668, Cys671, and Cys675.

It in the N-terminal section; belongs to the FAD-binding oxidoreductase/transferase type 4 family. The cofactor is [4Fe-4S] cluster. FAD is required as a cofactor.

It carries out the reaction (R)-2-hydroxyglutarate + A = 2-oxoglutarate + AH2. It functions in the pathway amino-acid degradation. Functionally, catalyzes the oxidation of D-2-hydroxyglutarate (D-2-HGA) to 2-oxoglutarate. Is involved in a D-lysine catabolic pathway. In Pseudomonas putida (strain ATCC 47054 / DSM 6125 / CFBP 8728 / NCIMB 11950 / KT2440), this protein is D-2-hydroxyglutarate dehydrogenase.